The sequence spans 456 residues: GTPase Der (456 aa).

2 consecutive EngA-type G domains span residues 2 to 167 and 176 to 351; these read LKVA…DQFG and ATFC…AQLK. Residues 8-15, 55-59, 118-121, 182-189, 229-233, and 294-297 contribute to the GTP site; these read GKPNVGKS, DTGGL, NKIE, DTAGI, and NKWD. One can recognise a KH-like domain in the interval 352 to 436; it reads IKISTSLLND…PITLYFKSKN (85 aa).

The protein belongs to the TRAFAC class TrmE-Era-EngA-EngB-Septin-like GTPase superfamily. EngA (Der) GTPase family. In terms of assembly, associates with the 50S ribosomal subunit.

GTPase that plays an essential role in the late steps of ribosome biogenesis. The sequence is that of GTPase Der from Mycoplasmoides gallisepticum (strain R(low / passage 15 / clone 2)) (Mycoplasma gallisepticum).